The sequence spans 101 residues: Large ribosomal subunit protein uL23 (101 aa).

It belongs to the universal ribosomal protein uL23 family. In terms of assembly, part of the 50S ribosomal subunit. Contacts protein L29, and trigger factor when it is bound to the ribosome.

Functionally, one of the early assembly proteins it binds 23S rRNA. One of the proteins that surrounds the polypeptide exit tunnel on the outside of the ribosome. Forms the main docking site for trigger factor binding to the ribosome. The sequence is that of Large ribosomal subunit protein uL23 from Lactobacillus helveticus (strain DPC 4571).